A 418-amino-acid chain; its full sequence is MDKLSIQSGGPLAGTVVISGAKNAALPILMAGVLAESPFVLTNVPSLRDVDTSCKLLRCLGAEVTQDGDRITIDSSRIDHFVAPYELVKTMRASILILGPLLARFGTADVSLPGGCAIGARPVNLHLHGLEQMGAKIEVKEGYIKARVDGRLKGAHIFMDMVSVGATENLLMAAALADGVTVIENAAREPEVIDLANCLVAMGAQISGIGTATLKITGVERLNGCDYRVMPDRIETGTFLVAAAVTRGRIRCENADPSSLESVLAKLEDAGAEINTGDDWIELDMHGKRPKAVNIKTAPYPAFPTDMQAQFCVLNCLAEGTGTITETIFENRFMHVPELMRMGANMELEGHTCIVHGVERLSGAQVMATDLRASASLVIAGLMADGTTLVDRIYHLDRGYEHIETKFEGLGGKVVRVK.

Residue lysine 22–asparagine 23 participates in phosphoenolpyruvate binding. Arginine 92 is a UDP-N-acetyl-alpha-D-glucosamine binding site. Residue cysteine 116 is the Proton donor of the active site. Cysteine 116 carries the post-translational modification 2-(S-cysteinyl)pyruvic acid O-phosphothioketal. The UDP-N-acetyl-alpha-D-glucosamine site is built by aspartate 306 and isoleucine 328.

Belongs to the EPSP synthase family. MurA subfamily.

It is found in the cytoplasm. The enzyme catalyses phosphoenolpyruvate + UDP-N-acetyl-alpha-D-glucosamine = UDP-N-acetyl-3-O-(1-carboxyvinyl)-alpha-D-glucosamine + phosphate. The protein operates within cell wall biogenesis; peptidoglycan biosynthesis. Cell wall formation. Adds enolpyruvyl to UDP-N-acetylglucosamine. The protein is UDP-N-acetylglucosamine 1-carboxyvinyltransferase of Shewanella amazonensis (strain ATCC BAA-1098 / SB2B).